We begin with the raw amino-acid sequence, 349 residues long: Phenylalanine--tRNA ligase alpha subunit (349 aa).

Mg(2+) is bound at residue Glu261.

This sequence belongs to the class-II aminoacyl-tRNA synthetase family. Phe-tRNA synthetase alpha subunit type 1 subfamily. In terms of assembly, tetramer of two alpha and two beta subunits. It depends on Mg(2+) as a cofactor.

It localises to the cytoplasm. The enzyme catalyses tRNA(Phe) + L-phenylalanine + ATP = L-phenylalanyl-tRNA(Phe) + AMP + diphosphate + H(+). In Leuconostoc citreum (strain KM20), this protein is Phenylalanine--tRNA ligase alpha subunit.